The sequence spans 458 residues: UDP-N-acetylmuramate--L-alanine ligase (458 aa).

112 to 118 contributes to the ATP binding site; the sequence is GTHGKTT.

This sequence belongs to the MurCDEF family.

It is found in the cytoplasm. It catalyses the reaction UDP-N-acetyl-alpha-D-muramate + L-alanine + ATP = UDP-N-acetyl-alpha-D-muramoyl-L-alanine + ADP + phosphate + H(+). Its pathway is cell wall biogenesis; peptidoglycan biosynthesis. In terms of biological role, cell wall formation. This chain is UDP-N-acetylmuramate--L-alanine ligase, found in Geotalea uraniireducens (strain Rf4) (Geobacter uraniireducens).